The primary structure comprises 156 residues: Transcription elongation factor GreA 1 (156 aa).

Residues 43 to 74 (RSENAEYSSAKRDLGRLESRLRYLNKQLQYAQ) adopt a coiled-coil conformation.

It belongs to the GreA/GreB family.

In terms of biological role, necessary for efficient RNA polymerase transcription elongation past template-encoded arresting sites. The arresting sites in DNA have the property of trapping a certain fraction of elongating RNA polymerases that pass through, resulting in locked ternary complexes. Cleavage of the nascent transcript by cleavage factors such as GreA or GreB allows the resumption of elongation from the new 3'terminus. GreA releases sequences of 2 to 3 nucleotides. The protein is Transcription elongation factor GreA 1 of Lactiplantibacillus plantarum (strain ATCC BAA-793 / NCIMB 8826 / WCFS1) (Lactobacillus plantarum).